The following is a 60-amino-acid chain: Large ribosomal subunit protein bL33 (60 aa).

It belongs to the bacterial ribosomal protein bL33 family.

In Flavobacterium psychrophilum (strain ATCC 49511 / DSM 21280 / CIP 103535 / JIP02/86), this protein is Large ribosomal subunit protein bL33.